The following is a 381-amino-acid chain: Chorismate synthase (381 aa).

The NADP(+) site is built by arginine 41 and arginine 47. Residues 127 to 129 (RAS), 247 to 248 (QA), glycine 291, 306 to 310 (KPIPT), and arginine 332 contribute to the FMN site.

This sequence belongs to the chorismate synthase family. As to quaternary structure, homotetramer. It depends on FMNH2 as a cofactor.

The enzyme catalyses 5-O-(1-carboxyvinyl)-3-phosphoshikimate = chorismate + phosphate. It functions in the pathway metabolic intermediate biosynthesis; chorismate biosynthesis; chorismate from D-erythrose 4-phosphate and phosphoenolpyruvate: step 7/7. Functionally, catalyzes the anti-1,4-elimination of the C-3 phosphate and the C-6 proR hydrogen from 5-enolpyruvylshikimate-3-phosphate (EPSP) to yield chorismate, which is the branch point compound that serves as the starting substrate for the three terminal pathways of aromatic amino acid biosynthesis. This reaction introduces a second double bond into the aromatic ring system. In Anaeromyxobacter dehalogenans (strain 2CP-C), this protein is Chorismate synthase.